The following is a 505-amino-acid chain: Betaine aldehyde dehydrogenase (505 aa).

239 to 244 (GSTATG) contacts NAD(+). The Proton acceptor role is filled by glutamate 261. The Nucleophile role is filled by cysteine 296. The Microbody targeting signal motif lies at 503–505 (SKL).

The protein belongs to the aldehyde dehydrogenase family. As to quaternary structure, homodimer.

The protein resides in the peroxisome. It catalyses the reaction betaine aldehyde + NAD(+) + H2O = glycine betaine + NADH + 2 H(+). Its pathway is amine and polyamine biosynthesis; betaine biosynthesis via choline pathway; betaine from betaine aldehyde: step 1/1. The protein is Betaine aldehyde dehydrogenase of Hordeum vulgare (Barley).